Consider the following 130-residue polypeptide: Small ribosomal subunit protein uS11 (130 aa).

This sequence belongs to the universal ribosomal protein uS11 family. As to quaternary structure, part of the 30S ribosomal subunit. Interacts with proteins S7 and S18. Binds to IF-3.

Located on the platform of the 30S subunit, it bridges several disparate RNA helices of the 16S rRNA. Forms part of the Shine-Dalgarno cleft in the 70S ribosome. This is Small ribosomal subunit protein uS11 from Latilactobacillus sakei subsp. sakei (strain 23K) (Lactobacillus sakei subsp. sakei).